The primary structure comprises 207 residues: Protein GrpE (207 aa).

Residues 1–33 (MTDPNGPKDIPEQSAEAAEPVVSKPYIMPDDPE) form a disordered region.

Belongs to the GrpE family. Homodimer.

It is found in the cytoplasm. Its function is as follows. Participates actively in the response to hyperosmotic and heat shock by preventing the aggregation of stress-denatured proteins, in association with DnaK and GrpE. It is the nucleotide exchange factor for DnaK and may function as a thermosensor. Unfolded proteins bind initially to DnaJ; upon interaction with the DnaJ-bound protein, DnaK hydrolyzes its bound ATP, resulting in the formation of a stable complex. GrpE releases ADP from DnaK; ATP binding to DnaK triggers the release of the substrate protein, thus completing the reaction cycle. Several rounds of ATP-dependent interactions between DnaJ, DnaK and GrpE are required for fully efficient folding. The protein is Protein GrpE of Rhodopseudomonas palustris (strain BisA53).